The chain runs to 970 residues: Sodium/calcium exchanger 1 (970 aa).

The first 32 residues, 1 to 32, serve as a signal peptide directing secretion; the sequence is MLRLSLSPTYSLGFHLLAMMTLLISHVDHITA. The Extracellular segment spans residues 33–71; the sequence is ETEMVEEGNETGECTGSYYCKKGVILPIWEPQDPSFGDK. Residue N41 is glycosylated (N-linked (GlcNAc...) asparagine). The helical transmembrane segment at 72–92 threads the bilayer; it reads IARATVYFVAMVYMFLGVSII. Topologically, residues 93 to 133 are cytoplasmic; that stretch reads ADRFMSSIEVITSQEKEITIKKPNGETTKTTVRIWNETVSN. A helical transmembrane segment spans residues 134 to 154; it reads LTLMALGSSAPEILLSVIEVC. Residues 138 to 178 form an Alpha-1 repeat; it reads ALGSSAPEILLSVIEVCGHNFTAGDLGPSTIVGSAAFNMFI. Topologically, residues 155 to 167 are extracellular; the sequence is GHNFTAGDLGPST. N-linked (GlcNAc...) asparagine glycosylation is present at N157. Residues 168-188 form a helical membrane-spanning segment; it reads IVGSAAFNMFIIIALCVYVVP. Over 189–201 the chain is Cytoplasmic; the sequence is DGETRKIKHLRVF. The helical transmembrane segment at 202-222 threads the bilayer; that stretch reads FVTAAWSIFAYTWLYIILSVI. Residues 223–228 lie on the Extracellular side of the membrane; the sequence is SPGVVE. Residues 229-249 traverse the membrane as a helical segment; sequence VWEGLLTFFFFPICVVFAWVA. Topologically, residues 250–797 are cytoplasmic; that stretch reads DRRLLFYKYV…FVPPTEYWNG (548 aa). The segment at 251–270 is putative calmodulin-binding region; the sequence is RRLLFYKYVYKRYRAGKQRG. A phosphoserine mark is found at S282 and S389. Calx-beta domains follow at residues 393-493 and 524-624; these read VNTE…VHLS and ATVT…LEIG. The Ca(2+) site is built by E417, D453, D478, D479, I481, E483, E486, D530, D531, D532, E548, D584, D610, E611, E612, and E715. The chain crosses the membrane as a helical span at residues 798–818; it reads WACFIVSILMIGLLTAFIGDL. Over 819-821 the chain is Extracellular; sequence ASH. A helical membrane pass occupies residues 822-842; the sequence is FGCTIGLKDSVTAVVFVALGT. One copy of the Alpha-2 repeat lies at 839–875; it reads ALGTSVPDTFASKVAATQDQYADASIGNVTGSNAVNV. The Cytoplasmic segment spans residues 843–871; it reads SVPDTFASKVAATQDQYADASIGNVTGSN. Residues 872-892 traverse the membrane as a helical segment; the sequence is AVNVFLGIGVAWSIAAIYHAA. Residues 893–903 lie on the Extracellular side of the membrane; it reads NGEQFKVSPGT. A helical transmembrane segment spans residues 904-924; sequence LAFSVTLFTIFAFINVGVLLY. Over 925–941 the chain is Cytoplasmic; it reads RRRPEIGGELGGPRTAK. The helical transmembrane segment at 942–962 threads the bilayer; the sequence is LLTSCLFVLLWLLYIFFSSLE. Topologically, residues 963-970 are extracellular; sequence AYCHIKGF.

Belongs to the Ca(2+):cation antiporter (CaCA) (TC 2.A.19) family. SLC8 subfamily.

The protein localises to the cell membrane. The catalysed reaction is Ca(2+)(in) + 3 Na(+)(out) = Ca(2+)(out) + 3 Na(+)(in). Activated by micromolar levels of Ca(2+). Functionally, mediates the exchange of one Ca(2+) ion against three to four Na(+) ions across the cell membrane, and thereby contributes to the regulation of cytoplasmic Ca(2+) levels and Ca(2+)-dependent cellular processes. Contributes to Ca(2+) transport during excitation-contraction coupling in muscle. In a first phase, voltage-gated channels mediate the rapid increase of cytoplasmic Ca(2+) levels due to release of Ca(2+) stores from the endoplasmic reticulum. SLC8A1 mediates the export of Ca(2+) from the cell during the next phase, so that cytoplasmic Ca(2+) levels rapidly return to baseline. Required for normal embryonic heart development and the onset of heart contractions. The sequence is that of Sodium/calcium exchanger 1 (SLC8A1) from Cavia porcellus (Guinea pig).